The following is a 78-amino-acid chain: Large ribosomal subunit protein eL20 (78 aa).

The protein belongs to the eukaryotic ribosomal protein eL20 family. Part of the 50S ribosomal subunit. Binds 23S rRNA.

In Pyrobaculum aerophilum (strain ATCC 51768 / DSM 7523 / JCM 9630 / CIP 104966 / NBRC 100827 / IM2), this protein is Large ribosomal subunit protein eL20.